The following is a 227-amino-acid chain: UPF0173 metal-dependent hydrolase BCE_4747 (227 aa).

The protein belongs to the UPF0173 family.

This Bacillus cereus (strain ATCC 10987 / NRS 248) protein is UPF0173 metal-dependent hydrolase BCE_4747.